Here is a 233-residue protein sequence, read N- to C-terminus: 7-cyano-7-deazaguanine synthase (233 aa).

7–17 is an ATP binding site; it reads LSGGLDSAVTS. Residues C195, C206, C209, and C212 each contribute to the Zn(2+) site.

This sequence belongs to the QueC family. Zn(2+) serves as cofactor.

It carries out the reaction 7-carboxy-7-deazaguanine + NH4(+) + ATP = 7-cyano-7-deazaguanine + ADP + phosphate + H2O + H(+). The protein operates within purine metabolism; 7-cyano-7-deazaguanine biosynthesis. In terms of biological role, catalyzes the ATP-dependent conversion of 7-carboxy-7-deazaguanine (CDG) to 7-cyano-7-deazaguanine (preQ(0)). This Methanococcus maripaludis (strain C7 / ATCC BAA-1331) protein is 7-cyano-7-deazaguanine synthase.